We begin with the raw amino-acid sequence, 608 residues long: Alpha-glycerophosphate oxidase (608 aa).

Residue 21–49 participates in FAD binding; that stretch reads DLLIIGGGITGAGVALQAAASGLETGLIE. The segment at 393 to 418 is disordered; the sequence is SAVSKLESSTSEKHLDPSAVSRGSSL.

This sequence belongs to the FAD-dependent glycerol-3-phosphate dehydrogenase family. FAD serves as cofactor.

The protein resides in the cell membrane. It catalyses the reaction sn-glycerol 3-phosphate + O2 = dihydroxyacetone phosphate + H2O2. The protein operates within membrane lipid metabolism; glycerophospholipid metabolism. The sequence is that of Alpha-glycerophosphate oxidase (glpO) from Streptococcus pneumoniae serotype 4 (strain ATCC BAA-334 / TIGR4).